A 386-amino-acid polypeptide reads, in one-letter code: Histidine decarboxylase (386 aa).

Position 120 (histidine 120) interacts with substrate. Residue lysine 233 is modified to N6-(pyridoxal phosphate)lysine.

It belongs to the group II decarboxylase family. As to quaternary structure, homotetramer. Requires pyridoxal 5'-phosphate as cofactor.

It carries out the reaction L-histidine + H(+) = histamine + CO2. The protein operates within siderophore biosynthesis; anguibactin biosynthesis. This is Histidine decarboxylase from Vibrio anguillarum (strain ATCC 68554 / 775) (Listonella anguillarum).